Reading from the N-terminus, the 953-residue chain is Translation initiation factor IF-2 (953 aa).

The disordered stretch occupies residues 53-368 (AKKAVAGTSE…PVTERKFHEL (316 aa)). Basic and acidic residues-rich tracts occupy residues 135 to 151 (FKAE…ERRK) and 162 to 190 (RNDR…RNRQ). The segment covering 191 to 214 (EQGNQHRNQGQSQYNQQRQSFNQG) has biased composition (low complexity). Residues 236-266 (RSSEERFKQAKANKEALREQNKRKEQAKLED) show a composition bias toward basic and acidic residues. Residues 274–288 (PKPTAKAPATPAPTA) are compositionally biased toward low complexity. Residues 301 to 318 (ARPDKERDNFDHEEDGPR) are compositionally biased toward basic and acidic residues. A compositionally biased stretch (low complexity) spans 332–341 (NQKNSNWNNN). Residues 455-622 (ERPPVVTIMG…TVLLVAEIQE (168 aa)) form the tr-type G domain. A G1 region spans residues 464 to 471 (GHVDHGKT). 464 to 471 (GHVDHGKT) lines the GTP pocket. A G2 region spans residues 489–493 (GITQH). The segment at 510–513 (DTPG) is G3. Residues 510–514 (DTPGH) and 564–567 (NKID) contribute to the GTP site. Residues 564–567 (NKID) form a G4 region. The G5 stretch occupies residues 600–602 (SAK).

The protein belongs to the TRAFAC class translation factor GTPase superfamily. Classic translation factor GTPase family. IF-2 subfamily.

It is found in the cytoplasm. One of the essential components for the initiation of protein synthesis. Protects formylmethionyl-tRNA from spontaneous hydrolysis and promotes its binding to the 30S ribosomal subunits. Also involved in the hydrolysis of GTP during the formation of the 70S ribosomal complex. The chain is Translation initiation factor IF-2 from Streptococcus gordonii (strain Challis / ATCC 35105 / BCRC 15272 / CH1 / DL1 / V288).